We begin with the raw amino-acid sequence, 264 residues long: Thymidylate synthase (264 aa).

Position 21 (Arg21) interacts with dUMP. A (6R)-5,10-methylene-5,6,7,8-tetrahydrofolate-binding site is contributed by His51. 126 to 127 (RR) lines the dUMP pocket. Cys146 acts as the Nucleophile in catalysis. Residues 166-169 (RSCD), Asn177, and 207-209 (HLY) contribute to the dUMP site. Asp169 is a binding site for (6R)-5,10-methylene-5,6,7,8-tetrahydrofolate. Ala263 provides a ligand contact to (6R)-5,10-methylene-5,6,7,8-tetrahydrofolate.

This sequence belongs to the thymidylate synthase family. Bacterial-type ThyA subfamily. Homodimer.

It is found in the cytoplasm. The enzyme catalyses dUMP + (6R)-5,10-methylene-5,6,7,8-tetrahydrofolate = 7,8-dihydrofolate + dTMP. It functions in the pathway pyrimidine metabolism; dTTP biosynthesis. Catalyzes the reductive methylation of 2'-deoxyuridine-5'-monophosphate (dUMP) to 2'-deoxythymidine-5'-monophosphate (dTMP) while utilizing 5,10-methylenetetrahydrofolate (mTHF) as the methyl donor and reductant in the reaction, yielding dihydrofolate (DHF) as a by-product. This enzymatic reaction provides an intracellular de novo source of dTMP, an essential precursor for DNA biosynthesis. The protein is Thymidylate synthase of Yersinia pseudotuberculosis serotype O:1b (strain IP 31758).